The chain runs to 88 residues: Small ribosomal subunit protein bS20 (88 aa).

It belongs to the bacterial ribosomal protein bS20 family.

Its function is as follows. Binds directly to 16S ribosomal RNA. The chain is Small ribosomal subunit protein bS20 from Bartonella henselae (strain ATCC 49882 / DSM 28221 / CCUG 30454 / Houston 1) (Rochalimaea henselae).